Reading from the N-terminus, the 457-residue chain is ATP synthase subunit beta (457 aa).

Residue 147–154 (GGAGVGKT) participates in ATP binding.

It belongs to the ATPase alpha/beta chains family. As to quaternary structure, F-type ATPases have 2 components, CF(1) - the catalytic core - and CF(0) - the membrane proton channel. CF(1) has five subunits: alpha(3), beta(3), gamma(1), delta(1), epsilon(1). CF(0) has three main subunits: a(1), b(2) and c(9-12). The alpha and beta chains form an alternating ring which encloses part of the gamma chain. CF(1) is attached to CF(0) by a central stalk formed by the gamma and epsilon chains, while a peripheral stalk is formed by the delta and b chains.

The protein resides in the cell inner membrane. The catalysed reaction is ATP + H2O + 4 H(+)(in) = ADP + phosphate + 5 H(+)(out). Produces ATP from ADP in the presence of a proton gradient across the membrane. The catalytic sites are hosted primarily by the beta subunits. This chain is ATP synthase subunit beta, found in Haemophilus influenzae (strain 86-028NP).